Here is a 70-residue protein sequence, read N- to C-terminus: uncharacterized protein (70 aa).

The C2H2-type zinc finger occupies 21–43; sequence YECPICGEIYIKRKSMITHLRKH.

This is an uncharacterized protein from Saccharolobus islandicus (Sulfolobus islandicus).